Consider the following 148-residue polypeptide: Hut operon positive regulatory protein (148 aa).

The protein belongs to the HutP family. As to quaternary structure, homohexamer.

In terms of biological role, antiterminator that binds to cis-acting regulatory sequences on the mRNA in the presence of histidine, thereby suppressing transcription termination and activating the hut operon for histidine utilization. In Bacillus velezensis (strain DSM 23117 / BGSC 10A6 / LMG 26770 / FZB42) (Bacillus amyloliquefaciens subsp. plantarum), this protein is Hut operon positive regulatory protein.